A 269-amino-acid chain; its full sequence is Aquaporin-7 (269 aa).

Residues 1–20 (MAGSVLENIQSVLQKTWVRE) are Cytoplasmic-facing. Serine 4 is subject to Phosphoserine. Residues 21–38 (FLAEFLSTYVLMVFGLGS) form a helical membrane-spanning segment. The Extracellular segment spans residues 39–51 (VAHMVLGERLGSY). A helical membrane pass occupies residues 52 to 69 (LGVNLGFGFGVTMGIHVA). The Cytoplasmic portion of the chain corresponds to 70 to 73 (GGIS). Positions 74-87 (GAHMNAAVTFTNCA) form an intramembrane region, discontinuously helical. The NPA 1 motif lies at 78–80 (NAA). The Cytoplasmic portion of the chain corresponds to 88-95 (LGRMAWKK). Residues 96 to 116 (FPIYVLGQFLGSFLAAATTYL) traverse the membrane as a helical segment. The Extracellular portion of the chain corresponds to 117 to 151 (IFYGAINHYAGGELLVTGPKSTANIFATYLPEHMT). Residues 152-172 (LWRGFVDEVFVTGMLQLCIFA) form a helical membrane-spanning segment. Over 173–184 (ITDKLNSPALQG) the chain is Cytoplasmic. A helical transmembrane segment spans residues 185–201 (TEPLMIGILVCVLGVSL). The Extracellular segment spans residues 202 to 205 (GMNT). The discontinuously helical intramembrane region spans 206–219 (GYAINPSRDLPPRF). An NPA 2 motif is present at residues 210-212 (NPS). Residues 220–237 (FTFIAGWGKKVFSAGNNW) are Extracellular-facing. Residues 238 to 259 (WWVPVVAPLLGAYLGGIVYLGL) form a helical membrane-spanning segment. At 260–269 (IHAGIPPQGS) the chain is on the cytoplasmic side.

Belongs to the MIP/aquaporin (TC 1.A.8) family. In terms of assembly, homotetramer; each monomer provides an independent glycerol/water pore. Two homotetramers on opposing membranes can dimerize, forming a cell-cell junction. Interacts with PLIN1. In terms of processing, phosphorylation by PKA could prevent the interaction with PLIN1. As to expression, detected in heart, kidney and testis.

It localises to the cell membrane. Its subcellular location is the cytoplasmic vesicle membrane. The protein localises to the lipid droplet. The enzyme catalyses glycerol(in) = glycerol(out). It carries out the reaction H2O(in) = H2O(out). The catalysed reaction is urea(in) = urea(out). Glycerol transport is regulated by pH, with the porin being permeable to glycerol at pH 7.4 but not at pH 5.5. Water permeability, however, is not influenced by pH. Not inhibited by mercury ions. In terms of biological role, aquaglyceroporins form homotetrameric transmembrane channels, with each monomer independently mediating glycerol and water transport across the plasma membrane along their osmotic gradient. Could also be permeable to urea. Mediates the efflux of glycerol, formed upon triglyceride hydrolysis, to avoid its accumulation in adipocytes and to make it available to other tissues. In the kidney, mediates the reabsorption of glycerol, preventing its loss in urine, again participating to energy homeostasis. In pancreatic beta cells, it also mediates the efflux of glycerol, regulating its intracellular levels. The polypeptide is Aquaporin-7 (Rattus norvegicus (Rat)).